The sequence spans 212 residues: Ion-translocating oxidoreductase complex subunit G (212 aa).

Residues 9-29 (GFLLALFALICTGLVAAVNQQ) form a helical membrane-spanning segment. Residue Thr-176 is modified to FMN phosphoryl threonine.

It belongs to the RnfG family. As to quaternary structure, the complex is composed of six subunits: RnfA, RnfB, RnfC, RnfD, RnfE and RnfG. FMN is required as a cofactor.

It localises to the cell inner membrane. Part of a membrane-bound complex that couples electron transfer with translocation of ions across the membrane. The protein is Ion-translocating oxidoreductase complex subunit G of Shewanella baltica (strain OS223).